Reading from the N-terminus, the 358-residue chain is MHAVTRPTLREAVARLAPGTGLRDGLERILRGRTGALIVLGHDENVEAICDGGFSLDVRYAATRLRELCKMDGAVVLSTDGSRIVRANVQLVPDPSIPTDESGTRHRSAERAAIQTGYPVISVSHSMNIVTVYVRGERHVLTDSATILSRANQAIATLERYKTRLDEVSRQLSRAEIEDFVTLRDVMTVVQRLELVRRIGLVIDYDVVELGTDGRQLRLQLDELLGGNDTARELIVRDYHANPEPPSTGQINATLDELDALSDGDLLDFTALAKVFGYPTTTEAQDSTLSPRGYRAMAGIPRLQFAHADLLVRAFGTLQGLLAASAGDLQSVDGIGAMWARHVREGLSQLAESTISDQ.

One can recognise a DAC domain in the interval 6 to 144; sequence RPTLREAVAR…RGERHVLTDS (139 aa). Residues G73, L91, and 104–108 contribute to the ATP site; that span reads TRHRS.

It belongs to the DisA family. Homooctamer. Mg(2+) serves as cofactor.

The enzyme catalyses 2 ATP = 3',3'-c-di-AMP + 2 diphosphate. In terms of biological role, participates in a DNA-damage check-point. DisA forms globular foci that rapidly scan along the chromosomes searching for lesions. Its function is as follows. Also has diadenylate cyclase activity, catalyzing the condensation of 2 ATP molecules into cyclic di-AMP (c-di-AMP). c-di-AMP likely acts as a signaling molecule that may couple DNA integrity with a cellular process. This is DNA integrity scanning protein DisA from Mycobacterium tuberculosis (strain ATCC 25177 / H37Ra).